The primary structure comprises 216 residues: Ribosomal RNA large subunit methyltransferase E (216 aa).

5 residues coordinate S-adenosyl-L-methionine: G71, W73, D88, D104, and D126. K166 serves as the catalytic Proton acceptor.

It belongs to the class I-like SAM-binding methyltransferase superfamily. RNA methyltransferase RlmE family.

Its subcellular location is the cytoplasm. It catalyses the reaction uridine(2552) in 23S rRNA + S-adenosyl-L-methionine = 2'-O-methyluridine(2552) in 23S rRNA + S-adenosyl-L-homocysteine + H(+). Functionally, specifically methylates the uridine in position 2552 of 23S rRNA at the 2'-O position of the ribose in the fully assembled 50S ribosomal subunit. This chain is Ribosomal RNA large subunit methyltransferase E, found in Wolbachia sp. subsp. Brugia malayi (strain TRS).